The sequence spans 279 residues: NAD kinase (279 aa).

D57 acts as the Proton acceptor in catalysis. Residues 57–58, 133–134, R159, D161, and 172–177 each bind NAD(+); these read DG, NE, and TAYNKS.

This sequence belongs to the NAD kinase family. The cofactor is a divalent metal cation.

Its subcellular location is the cytoplasm. It catalyses the reaction NAD(+) + ATP = ADP + NADP(+) + H(+). Functionally, involved in the regulation of the intracellular balance of NAD and NADP, and is a key enzyme in the biosynthesis of NADP. Catalyzes specifically the phosphorylation on 2'-hydroxyl of the adenosine moiety of NAD to yield NADP. This Streptococcus pyogenes serotype M28 (strain MGAS6180) protein is NAD kinase.